The primary structure comprises 67 residues: Large ribosomal subunit protein uL29 (67 aa).

It belongs to the universal ribosomal protein uL29 family.

The chain is Large ribosomal subunit protein uL29 from Pelotomaculum thermopropionicum (strain DSM 13744 / JCM 10971 / SI).